Reading from the N-terminus, the 99-residue chain is Large ribosomal subunit protein uL23 (99 aa).

Belongs to the universal ribosomal protein uL23 family. Part of the 50S ribosomal subunit. Contacts protein L29, and trigger factor when it is bound to the ribosome.

In terms of biological role, one of the early assembly proteins it binds 23S rRNA. One of the proteins that surrounds the polypeptide exit tunnel on the outside of the ribosome. Forms the main docking site for trigger factor binding to the ribosome. The protein is Large ribosomal subunit protein uL23 of Rhodopseudomonas palustris (strain BisB5).